We begin with the raw amino-acid sequence, 61 residues long: Small ribosomal subunit protein uS14 (61 aa).

Positions 24, 27, 40, and 43 each coordinate Zn(2+).

This sequence belongs to the universal ribosomal protein uS14 family. Zinc-binding uS14 subfamily. As to quaternary structure, part of the 30S ribosomal subunit. Contacts proteins S3 and S10. Requires Zn(2+) as cofactor.

Binds 16S rRNA, required for the assembly of 30S particles and may also be responsible for determining the conformation of the 16S rRNA at the A site. This is Small ribosomal subunit protein uS14 from Frankia casuarinae (strain DSM 45818 / CECT 9043 / HFP020203 / CcI3).